The sequence spans 280 residues: Dexamethasone-induced Ras-related protein 1 (280 aa).

Residue Cys11 is modified to S-nitrosocysteine. 31-38 (GSSKVGKT) is a binding site for GTP. An Effector region motif is present at residues 53 to 61 (YTPTIEDFH). GTP-binding positions include 78–82 (DTSGN) and 145–148 (NKGD). At Cys277 the chain carries Cysteine methyl ester. Residue Cys277 is the site of S-farnesyl cysteine attachment. Positions 278–280 (VIS) are cleaved as a propeptide — removed in mature form.

The protein belongs to the small GTPase superfamily. RasD family. In terms of assembly, forms a ternary complex with CAPON and NOS1. Component of a complex, at least composed of APBB1, RASD1/DEXRAS1 and APP. Interacts with APBB1/FE65. Forms. S-nitrosylation stimulates guanine-nucleotide exchange activity. Prominently found in brain at both mRNA and protein levels. Moderate expression in testis and lung. Slightly expressed in heart, spleen, skeletal muscle, liver and kidney.

It localises to the cell membrane. The protein localises to the cytoplasm. Its subcellular location is the perinuclear region. The protein resides in the nucleus. Functionally, small GTPase. Negatively regulates the transcription regulation activity of the APBB1/FE65-APP complex via its interaction with APBB1/FE65. This is Dexamethasone-induced Ras-related protein 1 (Rasd1) from Rattus norvegicus (Rat).